Here is a 415-residue protein sequence, read N- to C-terminus: Styrene monooxygenase StyA (415 aa).

It belongs to the StyA family. In terms of assembly, homodimer. A direct interaction with the monooxygenase reductase component StyB seems not to be necessary for the enzymatic activity.

The enzyme catalyses styrene + FADH2 + O2 = (S)-styrene oxide + FAD + H2O + H(+). It participates in aromatic compound metabolism. Its function is as follows. Styrene monooxygenase which catalyzes the first step in the aerobic styrene degradation pathway by enantioselective epoxidation of the vinyl side chain. In a two-component system, a reductase utilizes NADH to reduce FAD, which is then transferred to the oxygenase; the electron transfer is proposed to occur via a diffusing flavin. The sequence is that of Styrene monooxygenase StyA (styA) from Pseudomonas sp.